Here is a 348-residue protein sequence, read N- to C-terminus: Probable dual-specificity RNA methyltransferase RlmN (348 aa).

Glu-93 acts as the Proton acceptor in catalysis. The Radical SAM core domain maps to 99–323 (TEKRLTACLS…QTRLSNSGIN (225 aa)). An intrachain disulfide couples Cys-106 to Cys-338. 3 residues coordinate [4Fe-4S] cluster: Cys-113, Cys-117, and Cys-120. Residues 160-161 (GE), Ser-190, 219-221 (SLH), and Asn-295 each bind S-adenosyl-L-methionine. The active-site S-methylcysteine intermediate is the Cys-338.

Belongs to the radical SAM superfamily. RlmN family. Requires [4Fe-4S] cluster as cofactor.

It localises to the cytoplasm. The catalysed reaction is adenosine(2503) in 23S rRNA + 2 reduced [2Fe-2S]-[ferredoxin] + 2 S-adenosyl-L-methionine = 2-methyladenosine(2503) in 23S rRNA + 5'-deoxyadenosine + L-methionine + 2 oxidized [2Fe-2S]-[ferredoxin] + S-adenosyl-L-homocysteine. The enzyme catalyses adenosine(37) in tRNA + 2 reduced [2Fe-2S]-[ferredoxin] + 2 S-adenosyl-L-methionine = 2-methyladenosine(37) in tRNA + 5'-deoxyadenosine + L-methionine + 2 oxidized [2Fe-2S]-[ferredoxin] + S-adenosyl-L-homocysteine. In terms of biological role, specifically methylates position 2 of adenine 2503 in 23S rRNA and position 2 of adenine 37 in tRNAs. This is Probable dual-specificity RNA methyltransferase RlmN from Prochlorococcus marinus subsp. pastoris (strain CCMP1986 / NIES-2087 / MED4).